We begin with the raw amino-acid sequence, 214 residues long: uncharacterized protein (214 aa).

Residues 9 to 31 (FLYFAISVLVNLLFLKILYIYLF) traverse the membrane as a helical segment. A disordered region spans residues 53 to 74 (APPKKPGKPQKKVVKKKPEAVS). Over residues 54-67 (PPKKPGKPQKKVVK) the composition is skewed to basic residues.

It localises to the membrane. This is an uncharacterized protein from Aquifex aeolicus (strain VF5).